The primary structure comprises 253 residues: Imidazole glycerol phosphate synthase subunit HisF (253 aa).

Catalysis depends on residues aspartate 11 and aspartate 130.

The protein belongs to the HisA/HisF family. In terms of assembly, heterodimer of HisH and HisF.

It is found in the cytoplasm. It carries out the reaction 5-[(5-phospho-1-deoxy-D-ribulos-1-ylimino)methylamino]-1-(5-phospho-beta-D-ribosyl)imidazole-4-carboxamide + L-glutamine = D-erythro-1-(imidazol-4-yl)glycerol 3-phosphate + 5-amino-1-(5-phospho-beta-D-ribosyl)imidazole-4-carboxamide + L-glutamate + H(+). It functions in the pathway amino-acid biosynthesis; L-histidine biosynthesis; L-histidine from 5-phospho-alpha-D-ribose 1-diphosphate: step 5/9. In terms of biological role, IGPS catalyzes the conversion of PRFAR and glutamine to IGP, AICAR and glutamate. The HisF subunit catalyzes the cyclization activity that produces IGP and AICAR from PRFAR using the ammonia provided by the HisH subunit. In Ruegeria pomeroyi (strain ATCC 700808 / DSM 15171 / DSS-3) (Silicibacter pomeroyi), this protein is Imidazole glycerol phosphate synthase subunit HisF.